The sequence spans 219 residues: MIKIENLTKSYRTPTGRHYVFKNLNIIFPKGYNIALIGQNGAGKSTLLRIIGGIDRPDSGNIITEHKISWPVGLAGGFQGSLTGRENVKFVARLYAKRDELNERVDFVEEFSELGKYFDMPIKTYSSGMRSRLAFGLSMAFKFDYYLIDEITAVGDAKFKKKCSDIFDKIREKSHLIMVSHSERALKEYCDVAIYLNKEGQGKFYKNVTEAIADYKKDL.

In terms of domain architecture, ABC transporter spans 2–218 (IKIENLTKSY…TEAIADYKKD (217 aa)). An ATP-binding site is contributed by 38 to 45 (GQNGAGKS).

This sequence belongs to the ABC transporter superfamily.

The protein resides in the cell inner membrane. Functionally, putative ATP-binding protein, and an energy coupling component for the transport of polysialic acid across the cytoplasmic membrane. This Escherichia coli protein is Polysialic acid transport ATP-binding protein KpsT (kpsT).